A 360-amino-acid polypeptide reads, in one-letter code: Venom serine protease Bi-VSP (360 aa).

An N-terminal signal peptide occupies residues 1 to 26 (MTGSKMLFACLALIAFLHPLVHVASA). Residues 27 to 113 (QECTTPNNKA…CGFSNVSHTR (87 aa)) constitute a propeptide that is removed on maturation. Positions 28-79 (ECTTPNNKAGKCLGIRVCKPLLEMLQTQGHAAADFLRQSVCKYENNNPIVCC) constitute a Clip domain. Disulfide bonds link Cys-29–Cys-78, Cys-39–Cys-68, Cys-45–Cys-79, Cys-104–Cys-230, Cys-147–Cys-163, Cys-278–Cys-296, and Cys-307–Cys-335. N-linked (GlcNAc...) asparagine glycosylation is present at Asn-108. The 247-residue stretch at 114–360 (VVGGKPAVLG…LDDFILPAMQ (247 aa)) folds into the Peptidase S1 domain. The active-site Charge relay system is the His-162. Residues Asp-176, Asn-178, Arg-181, and Asp-184 each coordinate Ca(2+). Residue Asp-210 is the Charge relay system of the active site. Ser-311 acts as the Charge relay system in catalysis.

This sequence belongs to the peptidase S1 family. CLIP subfamily. As to expression, expressed by the venom gland.

Its subcellular location is the secreted. Its function is as follows. Multifunctional venom serine protease. In insects, it acts as an arthropod prophenoloxidase-activating factor, thereby triggering the phenoloxidase cascade. When injected into larvae, it induces a lethal melanization response in target insects by modulating the innate immune response. In mammals, it converts fibrinogen into fibrin, activates prothrombin, and also degrades fibrin. In mammal, it may act in a cooperative manner with the serine protease inhibitor Bi-KTI (AC G3LH89) to promote the spread of bee venom under anti-bleeding conditions. The chain is Venom serine protease Bi-VSP from Bombus ignitus (Bumblebee).